A 646-amino-acid polypeptide reads, in one-letter code: Lipoteichoic acid synthase (646 aa).

Residues 1 to 7 (MSLPKKK) are Cytoplasmic-facing. A helical transmembrane segment spans residues 8–28 (IGIFAFFLLTVFTITLKTYFS). The Extracellular segment spans residues 29–43 (YYVDFSLGVKGLVQN). The chain crosses the membrane as a helical span at residues 44 to 64 (LILLMNPYSLIALVLSVFLFF). Topologically, residues 65–68 (KGKK) are cytoplasmic. The helical transmembrane segment at 69–89 (AFWFIFIGGFLLTFLLYANVV) threads the bilayer. Residues 90–119 (YFRFFSDFLTFSTLNQAGNVESMGGAVSAS) lie on the Extracellular side of the membrane. A helical transmembrane segment spans residues 120–140 (FKWYDFVYFIDTIIYLAILIF). Residues 141–153 (KRKWLDNRAFSKK) are Cytoplasmic-facing. Residues 154-174 (FVPVVMATSVALFFLNLAFAE) form a helical membrane-spanning segment. The Extracellular portion of the chain corresponds to 175-646 (TDRPELLTRT…KSGPKGNEKK (472 aa)). Mn(2+) is bound by residues E255 and T300. T300 is a catalytic residue. H416 contacts substrate. Mn(2+) contacts are provided by D475 and H476.

Belongs to the LTA synthase family. Post-translationally, proteolytically cleaved.

The protein localises to the cell membrane. The protein resides in the secreted. The protein operates within cell wall biogenesis; lipoteichoic acid biosynthesis. Catalyzes the polymerization of lipoteichoic acid (LTA) polyglycerol phosphate, a reaction that presumably uses phosphatidylglycerol (PG) as substrate. Is required for staphylococcal growth and cell division process. This chain is Lipoteichoic acid synthase (ltaS), found in Staphylococcus epidermidis (strain ATCC 35984 / DSM 28319 / BCRC 17069 / CCUG 31568 / BM 3577 / RP62A).